The following is a 496-amino-acid chain: O-acetyltransferase cpsE (496 aa).

The span at 203 to 217 (IGTQGQLPDGVQSSD) shows a compositional bias: polar residues. Positions 203–228 (IGTQGQLPDGVQSSDDPTDGAGDIFE) are disordered.

Belongs to the fumigaclavine B O-acetyltransferase family.

It carries out the reaction campesine A + acetyl-CoA = campesine C + CoA. Its pathway is alkaloid biosynthesis. In terms of biological role, O-acetyltransferase; part of the gene cluster that mediates the biosynthesis of campesine G, a dimeric indole piperazine alkaloid that shows good insecticidal activity Galleria mellonella. Within the pathway, cpsE acetylates N13 of campesine A to produce campesine C. CpsE produces an inseparable mixture of two acyl-atropisomers due to the spontaneous rotation of an acyl group at N13 of piperazine ring. The non-canonical non-ribosomal peptide synthetase cpsA catalyzes the first steps of the pathway by producing L-tryptophanal and L-valinal from their respective amino-acids. These products condensate spontaneously to form trypyl-valyl pyrazine also known as didehydrocampesine A. The NmrA-like family domain-containing oxidoreductase cpsB is the next enzyme in cps pathway and reduces the unstable didehydrocampesine A to campesine A. The methyltransferase cpsF and the acetyltransferase cpsE both recognize N13 of piperazine ring to carry out methylation and acetylation of campesine A to produce campesine C and B, respectively. The cytochrome P450 monooxygenase cpsD then acts as a dimerase that catalyzes oxidative heterocoupling between campesine B and C to produce heterodimers with unexpected 6/5/6/6/6/6/5/6 eight-ring scaffold called campesine D. Finally,the cytochrome P450 monooxygenase cpsC is a regioselective dehydrogenase that catalyzes dehydrogenation reaction towards C2-N1 to produce campesine G. In Aspergillus campestris (strain IBT 28561), this protein is O-acetyltransferase cpsE.